Here is a 135-residue protein sequence, read N- to C-terminus: Actin-related protein 2/3 complex subunit 5B (135 aa).

The protein belongs to the ARPC5 family. As to quaternary structure, component of the Arp2/3 complex composed of ARP2, ARP3, ARPC1/p41-ARC, ARPC2/p34-ARC, ARPC3/p21-ARC, ARPC4/p20-ARC and ARPC5/p16-ARC.

The protein resides in the cytoplasm. It localises to the cytoskeleton. The protein localises to the cell projection. Its function is as follows. Functions as a component of the Arp2/3 complex which is involved in regulation of actin polymerization and together with an activating nucleation-promoting factor (NPF) mediates the formation of branched actin networks. Arp2/3 complex plays a critical role in the control of cell morphogenesis via the modulation of cell polarity development. This Arabidopsis thaliana (Mouse-ear cress) protein is Actin-related protein 2/3 complex subunit 5B (ARPC5B).